The following is a 124-amino-acid chain: Large ribosomal subunit protein bL21 (124 aa).

Residues 105-124 (TVKAEPKSKRAPAPEAAADA) form a disordered region. A compositionally biased stretch (low complexity) spans 115–124 (APAPEAAADA).

The protein belongs to the bacterial ribosomal protein bL21 family. Part of the 50S ribosomal subunit. Contacts protein L20.

Its function is as follows. This protein binds to 23S rRNA in the presence of protein L20. The chain is Large ribosomal subunit protein bL21 from Xanthobacter autotrophicus (strain ATCC BAA-1158 / Py2).